The following is a 254-amino-acid chain: UPF0603 protein YdjH (254 aa).

A signal peptide spans 1 to 29 (MRGFFGKAIFVVLAVFIMMPLLGIEAVRA). A helical membrane pass occupies residues 166–186 (IFFTWWFQLIAAIAVGGIAVS). Over residues 223–235 (VTRERKPSDKDSG) the composition is skewed to basic and acidic residues. The interval 223 to 254 (VTRERKPSDKDSGSDGGVTKGGTSYSGSRGSF) is disordered. Residues 243-254 (GGTSYSGSRGSF) show a composition bias toward polar residues.

It belongs to the UPF0603 family.

The protein localises to the cell membrane. In Bacillus subtilis (strain 168), this protein is UPF0603 protein YdjH (ydjH).